Consider the following 265-residue polypeptide: Exosome complex component RRP42 (265 aa).

This sequence belongs to the RNase PH family. As to quaternary structure, component of the RNA exosome complex. Specifically part of the catalytically inactive RNA exosome core complex (Exo-9) which may associate with the catalytic subunits RRP6 and DIS3 in cytoplasmic- and nuclear-specific RNA exosome complex forms. Exo-9 is formed by a hexameric base ring of RNase PH domain-containing subunits and a cap ring consisting of CSL4, RRP4 and RRP40.

The protein localises to the cytoplasm. The protein resides in the nucleus. Its subcellular location is the nucleolus. Its function is as follows. Non-catalytic component of the RNA exosome complex which has 3'-&gt;5' exoribonuclease activity and participates in a multitude of cellular RNA processing and degradation events. In the nucleus, the RNA exosome complex is involved in proper maturation of stable RNA species such as rRNA, snRNA and snoRNA, in the elimination of RNA processing by-products and non-coding 'pervasive' transcripts, such as antisense RNA species and cryptic unstable transcripts (CUTs), and of mRNAs with processing defects, thereby limiting or excluding their export to the cytoplasm. In the cytoplasm, the RNA exosome complex is involved in general mRNA turnover and in RNA surveillance pathways, preventing translation of aberrant mRNAs. The catalytic inactive RNA exosome core complex of 9 subunits (Exo-9) is proposed to play a pivotal role in the binding and presentation of RNA for ribonucleolysis, and to serve as a scaffold for the association with catalytic subunits and accessory proteins or complexes. RRP42 is part of the hexameric ring of RNase PH domain-containing subunits proposed to form a central channel which threads RNA substrates for degradation. This chain is Exosome complex component RRP42 (RRP42), found in Saccharomyces cerevisiae (strain ATCC 204508 / S288c) (Baker's yeast).